We begin with the raw amino-acid sequence, 125 residues long: Small ribosomal subunit protein bS6 (125 aa).

The interval 94–125 (KAETGASSMMKTVEREEARKASQAEFAASNER) is disordered. Over residues 105–115 (TVEREEARKAS) the composition is skewed to basic and acidic residues.

The protein belongs to the bacterial ribosomal protein bS6 family.

Binds together with bS18 to 16S ribosomal RNA. The chain is Small ribosomal subunit protein bS6 from Acidovorax ebreus (strain TPSY) (Diaphorobacter sp. (strain TPSY)).